The chain runs to 571 residues: Urease subunit alpha (571 aa).

Residues 133 to 571 enclose the Urease domain; that stretch reads GGIDTHVHFI…LPLTQRYFLF (439 aa). 3 residues coordinate Ni(2+): histidine 138, histidine 140, and lysine 221. Lysine 221 carries the N6-carboxylysine modification. Histidine 223 contributes to the substrate binding site. Ni(2+) is bound by residues histidine 250 and histidine 276. The active-site Proton donor is histidine 324. Aspartate 364 serves as a coordination point for Ni(2+).

The protein belongs to the metallo-dependent hydrolases superfamily. Urease alpha subunit family. Heterotrimer of UreA (gamma), UreB (beta) and UreC (alpha) subunits. Three heterotrimers associate to form the active enzyme. It depends on Ni cation as a cofactor. Post-translationally, carboxylation allows a single lysine to coordinate two nickel ions.

Its subcellular location is the cytoplasm. It catalyses the reaction urea + 2 H2O + H(+) = hydrogencarbonate + 2 NH4(+). Its pathway is nitrogen metabolism; urea degradation; CO(2) and NH(3) from urea (urease route): step 1/1. The sequence is that of Urease subunit alpha from Staphylococcus aureus (strain USA300).